Here is a 388-residue protein sequence, read N- to C-terminus: S-adenosylmethionine synthase (388 aa).

Residue His-16 coordinates ATP. Asp-18 is a binding site for Mg(2+). Glu-44 is a binding site for K(+). Glu-57 and Gln-100 together coordinate L-methionine. The tract at residues 100-110 (QSPDIAQGVDK) is flexible loop. ATP-binding positions include 167–169 (DAK), 233–234 (RF), Asp-242, 248–249 (RK), Ala-265, and Lys-269. Asp-242 serves as a coordination point for L-methionine. Lys-273 contributes to the L-methionine binding site.

It belongs to the AdoMet synthase family. In terms of assembly, homotetramer; dimer of dimers. The cofactor is Mg(2+). It depends on K(+) as a cofactor.

Its subcellular location is the cytoplasm. The catalysed reaction is L-methionine + ATP + H2O = S-adenosyl-L-methionine + phosphate + diphosphate. Its pathway is amino-acid biosynthesis; S-adenosyl-L-methionine biosynthesis; S-adenosyl-L-methionine from L-methionine: step 1/1. Its function is as follows. Catalyzes the formation of S-adenosylmethionine (AdoMet) from methionine and ATP. The overall synthetic reaction is composed of two sequential steps, AdoMet formation and the subsequent tripolyphosphate hydrolysis which occurs prior to release of AdoMet from the enzyme. The polypeptide is S-adenosylmethionine synthase (Polynucleobacter necessarius subsp. necessarius (strain STIR1)).